A 261-amino-acid chain; its full sequence is Ribosomal RNA small subunit methyltransferase A (261 aa).

6 residues coordinate S-adenosyl-L-methionine: Asn15, Ile17, Gly42, Glu64, Asp90, and Asn109.

This sequence belongs to the class I-like SAM-binding methyltransferase superfamily. rRNA adenine N(6)-methyltransferase family. RsmA subfamily.

The protein localises to the cytoplasm. It catalyses the reaction adenosine(1518)/adenosine(1519) in 16S rRNA + 4 S-adenosyl-L-methionine = N(6)-dimethyladenosine(1518)/N(6)-dimethyladenosine(1519) in 16S rRNA + 4 S-adenosyl-L-homocysteine + 4 H(+). Its function is as follows. Specifically dimethylates two adjacent adenosines (A1518 and A1519) in the loop of a conserved hairpin near the 3'-end of 16S rRNA in the 30S particle. May play a critical role in biogenesis of 30S subunits. The chain is Ribosomal RNA small subunit methyltransferase A from Wolbachia sp. subsp. Brugia malayi (strain TRS).